The following is a 103-amino-acid chain: Pro-corazonin (103 aa).

An N-terminal signal peptide occupies residues 1–19 (MSANVTLLLIFVTLASVTA). Glutamine 20 carries the pyrrolidone carboxylic acid modification. Asparagine 30 bears the Asparagine amide mark. A propeptide spanning residues 34–103 (DQGHLRPELK…NLNAMMDAFY (70 aa)) is cleaved from the precursor.

As to expression, expressed in corpora cardiaca (CC), corpora allata (CA), antennal lobe (AL) and gnathal ganglion (GNG) (at protein level). Expression in CC and CA detected in all animals, expression in AL and in GNG in some animals.

It is found in the secreted. Functionally, cardioactive peptide. Corazonin is probably involved in the physiological regulation of the heart beat. The polypeptide is Pro-corazonin (Agrotis ipsilon (Black cutworm moth)).